Here is a 204-residue protein sequence, read N- to C-terminus: COBRA-like protein 5 (204 aa).

Residues 1 to 24 (MESLFSTMIVLLLVSFSCLISTEA) form the signal peptide. 2 N-linked (GlcNAc...) asparagine glycosylation sites follow: asparagine 31 and asparagine 195.

It belongs to the COBRA family. In terms of tissue distribution, expressed in roots, stems, leaves, flowers and siliques.

The polypeptide is COBRA-like protein 5 (COBL5) (Arabidopsis thaliana (Mouse-ear cress)).